Reading from the N-terminus, the 492-residue chain is Myocyte-specific enhancer factor 2A (492 aa).

An MADS-box domain is found at 3–57; sequence RKKIQITRIMDERNRQVTFTKRKFGLMKKAYELSVLCDCEIALIIFNSSNKLFQY. Residues 58–86 constitute a DNA-binding region (mef2-type); it reads ASTDMDKVLLKYTEYNEPHESRTNSDIVE. Residue Ser-59 is modified to Phosphoserine; by CK2. Ser-98 is modified (phosphoserine). The disordered stretch occupies residues 183-227; the sequence is PQATLHRNVSPGAPQRPPSTGSAGGMLSTSDLTVPNGAGSSPVGN. Residues 209-227 show a composition bias toward polar residues; sequence LSTSDLTVPNGAGSSPVGN. Ser-235 is modified (phosphoserine). Residues 242–270 are disordered; that stretch reads TGANSLGKVMPTKSPPPPGGGSLGMNSRK. N6-acetyllysine is present on Lys-249. At Ser-255 the chain carries Phosphoserine. Residues 266–283 form a required for interaction with MAPKs region; it reads MNSRKPDLRVVIPPSSKG. A phosphothreonine; by MAPK7 and MAPK14 mark is found at Thr-304 and Thr-311. At Ser-347 the chain carries Phosphoserine; by MAPK7. The segment covering 382-394 has biased composition (polar residues); it reads SNLSINTNQNINI. The disordered stretch occupies residues 382 to 492; the sequence is SNLSINTNQN…KRMRMDAWVT (111 aa). An N6-acetyllysine; alternate modification is found at Lys-395. A Glycyl lysine isopeptide (Lys-Gly) (interchain with G-Cter in SUMO); alternate cross-link involves residue Lys-395. Ser-400 carries the phosphoserine; by CDK5 modification. The residue at position 407 (Thr-407) is a Phosphothreonine. Residues 417–430 are compositionally biased toward pro residues; sequence PQPPPPPPQAPQPQ. A Phosphoserine; by MAPK modification is found at Ser-438. Residues 438–451 show a composition bias toward low complexity; sequence SPVDSLSSSSSSYD. Basic and acidic residues-rich tracts occupy residues 452–462 and 473–492; these read GSDREDPRGDF and NSED…AWVT.

As to quaternary structure, binds DNA as a homo- or heterodimer. Dimerizes with MEF2D. Interacts with HDAC7. Interacts with PIAS1; the interaction enhances sumoylation. Interacts with HDAC4, HDAC9 and SLC2A4RG. Interacts (via the N-terminal) with MAPK7; the interaction results in the phosphorylation and transcriptional activity of MEF2A. Post-translationally, constitutive phosphorylation on Ser-400 promotes Lys-395 sumoylation thus preventing acetylation at this site. Dephosphorylation on Ser-400 by PPP3CA upon neuron depolarization promotes a switch from sumoylation to acetylation on residue Lys-395 leading to inhibition of dendrite claw differentiation. Phosphorylation on Thr-304 and Thr-311 are the main sites involved in p38 MAPK signaling and activate transcription. Phosphorylated on these sites by MAPK14/p38alpha and MAPK11/p38beta, but not by MAPK13/p38delta nor by MAPK12/p38gamma. Phosphorylation on Ser-400 by CDK5 induced by neurotoxicity inhibits MEF2A transcriptional activation leading to apoptosis of cortical neurons. Phosphorylation on Thr-304, Thr-311 and Ser-347 can be induced by EGF. Sumoylation on Lys-395 is enhanced by PIAS1 and represses transcriptional activity. Phosphorylation on Ser-400 is required for sumoylation. Has no effect on nuclear location nor on DNA binding. Sumoylated with SUMO1 and, to a lesser extent with SUMO2 and SUMO3. PIASx facilitates sumoylation in postsynaptic dendrites in the cerebellar cortex and promotes their morphogenesis. In terms of processing, acetylation on Lys-395 activates transcriptional activity. Acetylated by p300 on several sites in diffentiating myocytes. Acetylation on Lys-4 increases DNA binding and transactivation. Hyperacetylation by p300 leads to enhanced cardiac myocyte growth and heart failure. Post-translationally, proteolytically cleaved in cerebellar granule neurons on several sites by caspase 3 and caspase 7 following neurotoxicity. Preferentially cleaves the CDK5-mediated hyperphosphorylated form which leads to neuron apoptosis and transcriptional inactivation.

It is found in the nucleus. Its function is as follows. Transcriptional activator which binds specifically to the MEF2 element, 5'-YTA[AT](4)TAR-3', found in numerous muscle-specific genes. Also involved in the activation of numerous growth factor- and stress-induced genes. Mediates cellular functions not only in skeletal and cardiac muscle development, but also in neuronal differentiation and survival. Plays diverse roles in the control of cell growth, survival and apoptosis via p38 MAPK signaling in muscle-specific and/or growth factor-related transcription. In cerebellar granule neurons, phosphorylated and sumoylated MEF2A represses transcription of NUR77 promoting synaptic differentiation. Associates with chromatin to the ZNF16 promoter. The sequence is that of Myocyte-specific enhancer factor 2A (MEF2A) from Bos taurus (Bovine).